The sequence spans 440 residues: Collagen alpha-1(XXVI) chain (440 aa).

A signal peptide spans 1–20 (MKLVLLLPWACCCLCGSALA). The EMI domain occupies 52-128 (RRHWCHHTVT…PGFTGSNCEE (77 aa)). 3 disulfides stabilise this stretch: cysteine 56-cysteine 118, cysteine 83-cysteine 89, and cysteine 117-cysteine 126. Asparagine 70 carries N-linked (GlcNAc...) asparagine glycosylation. An N-linked (GlcNAc...) asparagine glycan is attached at asparagine 132. 2 disordered regions span residues 157–362 (EQPS…EGEG) and 390–440 (LASP…GDRK). The region spanning 199–267 (GPAGPPGQMG…PGPAGSPGLL (69 aa)) is the Collagen-like 1 domain. 3 stretches are compositionally biased toward pro residues: residues 200–215 (PAGP…PAGP), 231–243 (VGPP…PGPR), and 252–261 (PGPPGPPGPA). A compositionally biased stretch (polar residues) spans 269 to 281 (NTPQGVLYSLQTP). The region spanning 302-334 (GIPGPRGPPGPPGPPGPHGPPGPPGAPGSQGLV) is the Collagen-like 2 domain. Residues 306–327 (PRGPPGPPGPPGPHGPPGPPGA) show a composition bias toward pro residues. Positions 347 to 356 (SVKEEEDKAS) are enriched in basic and acidic residues.

In terms of assembly, homotrimer or heterotrimer. In terms of processing, hydroxylated on proline residues. N-glycosylated. As to expression, specifically expressed in the testis and ovary in adult tissues.

The protein localises to the secreted. The protein resides in the extracellular space. It localises to the extracellular matrix. This chain is Collagen alpha-1(XXVI) chain (Col26a1), found in Mus musculus (Mouse).